Here is a 116-residue protein sequence, read N- to C-terminus: Ribosome-binding factor A (116 aa).

The protein belongs to the RbfA family. As to quaternary structure, monomer. Binds 30S ribosomal subunits, but not 50S ribosomal subunits or 70S ribosomes.

It is found in the cytoplasm. Its function is as follows. One of several proteins that assist in the late maturation steps of the functional core of the 30S ribosomal subunit. Associates with free 30S ribosomal subunits (but not with 30S subunits that are part of 70S ribosomes or polysomes). Required for efficient processing of 16S rRNA. May interact with the 5'-terminal helix region of 16S rRNA. The protein is Ribosome-binding factor A of Streptococcus mutans serotype c (strain ATCC 700610 / UA159).